We begin with the raw amino-acid sequence, 144 residues long: Granulocyte-macrophage colony-stimulating factor (144 aa).

A signal peptide spans 1 to 17; the sequence is MWLQNLLFLGTVVCSIS. A glycan (O-linked (GalNAc...) serine) is linked at serine 22. A glycan (O-linked (GalNAc...) threonine) is linked at threonine 27. N-linked (GlcNAc...) asparagine glycosylation occurs at asparagine 44. 2 cysteine pairs are disulfide-bonded: cysteine 71/cysteine 113 and cysteine 105/cysteine 138.

This sequence belongs to the GM-CSF family. Monomer. The signaling GM-CSF receptor complex is a dodecamer of two head-to-head hexamers of two alpha, two beta, and two ligand subunits.

The protein localises to the secreted. In terms of biological role, cytokine that stimulates the growth and differentiation of hematopoietic precursor cells from various lineages, including granulocytes, macrophages, eosinophils and erythrocytes. The protein is Granulocyte-macrophage colony-stimulating factor (CSF2) of Canis lupus familiaris (Dog).